The primary structure comprises 355 residues: NADH-quinone oxidoreductase subunit H (355 aa).

Helical transmembrane passes span 25–45 (VVRILVVSVVILLCVAYLILW), 91–111 (WLYLIAPVMTVVPAFAVWAVI), 126–146 (LLYAMAISSIGVYAVILAGWA), 170–190 (MGFALVLVLMTAGSLNLSEIV), 205–225 (FLSWNWLPLLPAFVVYFISGI), 253–273 (MAFALFFLAEYINMIVISALA), 290–310 (FIPGIFWLVLKVFALLSVFIW), and 330–350 (VFLPVTVVWVIVVGFWMMSPL).

It belongs to the complex I subunit 1 family. As to quaternary structure, NDH-1 is composed of 14 different subunits. Subunits NuoA, H, J, K, L, M, N constitute the membrane sector of the complex.

The protein localises to the cell inner membrane. It carries out the reaction a quinone + NADH + 5 H(+)(in) = a quinol + NAD(+) + 4 H(+)(out). NDH-1 shuttles electrons from NADH, via FMN and iron-sulfur (Fe-S) centers, to quinones in the respiratory chain. The immediate electron acceptor for the enzyme in this species is believed to be ubiquinone. Couples the redox reaction to proton translocation (for every two electrons transferred, four hydrogen ions are translocated across the cytoplasmic membrane), and thus conserves the redox energy in a proton gradient. This subunit may bind ubiquinone. The chain is NADH-quinone oxidoreductase subunit H from Burkholderia cenocepacia (strain HI2424).